We begin with the raw amino-acid sequence, 200 residues long: MQLKRVAEAKLPTPWGDFLMVGFEELATGQDHVALVYGDISGQSPVLARVHSECLTGDALFSLRCDCGFQLEAALSHIAEEGRGILLYHRQEGRNIGLLNKIRAYALQDQGYDTVEANHQLGFAADERDFTLCADMFKLLNVEQVRLLTNNPKKVEILTEAGINIVERVPLIVGRNPKNAHYLDTKAAKMGHLLNSKPAE.

49-53 (RVHSE) is a binding site for GTP. 3 residues coordinate Zn(2+): Cys-54, Cys-65, and Cys-67. Residues Gln-70, 92-94 (EGR), and Thr-114 each bind GTP. Asp-126 acts as the Proton acceptor in catalysis. Catalysis depends on Arg-128, which acts as the Nucleophile. Residues Thr-149 and Lys-154 each coordinate GTP.

Belongs to the GTP cyclohydrolase II family. As to quaternary structure, homodimer. It depends on Zn(2+) as a cofactor.

The catalysed reaction is GTP + 4 H2O = 2,5-diamino-6-hydroxy-4-(5-phosphoribosylamino)-pyrimidine + formate + 2 phosphate + 3 H(+). It functions in the pathway cofactor biosynthesis; riboflavin biosynthesis; 5-amino-6-(D-ribitylamino)uracil from GTP: step 1/4. In terms of biological role, catalyzes the conversion of GTP to 2,5-diamino-6-ribosylamino-4(3H)-pyrimidinone 5'-phosphate (DARP), formate and pyrophosphate. The protein is GTP cyclohydrolase-2 of Klebsiella pneumoniae (strain 342).